The primary structure comprises 401 residues: Steroid C26-monooxygenase (401 aa).

Cys343 serves as a coordination point for heme.

This sequence belongs to the cytochrome P450 family. The cofactor is heme.

The catalysed reaction is cholest-4-en-3-one + 6 reduced [2Fe-2S]-[ferredoxin] + 3 O2 + 5 H(+) = (25R)-3-oxocholest-4-en-26-oate + 6 oxidized [2Fe-2S]-[ferredoxin] + 4 H2O. It functions in the pathway steroid metabolism; cholesterol degradation. Functionally, involved in the utilization of cholesterol as the sole carbon and energy source by degrading the side chain. Primarily catalyzes the sequential oxidation of the terminal methyl of cholest-4-en-3-one into (25R)-26-hydroxycholest-4-en-3-one (alcohol), (25R)-26-oxocholest-4-en-3-one (aldehyde), to finally yield the carboxylic acid (25R)-3-oxocholest-4-en-26-oate. Also able to sequentially oxidize cholesterol itself, not only cholest-4-en-3-one. The sequence is that of Steroid C26-monooxygenase from Mycolicibacterium smegmatis (strain ATCC 700084 / mc(2)155) (Mycobacterium smegmatis).